Here is a 493-residue protein sequence, read N- to C-terminus: Solute carrier family 2, facilitated glucose transporter member 3 (493 aa).

The Cytoplasmic portion of the chain corresponds to M1–L10. Residues V11 to N32 traverse the membrane as a helical segment. The Extracellular segment spans residues A33–S64. The N-linked (GlcNAc...) asparagine glycan is linked to N43. The chain crosses the membrane as a helical span at residues L65–V85. Topologically, residues N86–R90 are cytoplasmic. A helical transmembrane segment spans residues R91–A111. Residues K112–E118 lie on the Extracellular side of the membrane. A helical membrane pass occupies residues M119–I142. The Cytoplasmic portion of the chain corresponds to G143–A153. The chain crosses the membrane as a helical span at residues F154–L174. Q159 is a D-glucose binding site. Residues D175–L183 lie on the Extracellular side of the membrane. The helical transmembrane segment at W184–F204 threads the bilayer. Topologically, residues C205–P269 are cytoplasmic. Residue T232 is modified to Phosphothreonine. Residues L270–Y290 traverse the membrane as a helical segment. The tract at residues Q277–S279 is important for selectivity against fructose. D-glucose contacts are provided by residues Q280 to Q281 and N286. Over Y291–P304 the chain is Extracellular. The chain crosses the membrane as a helical span at residues I305 to L325. Residue N315 participates in D-glucose binding. Residues V326–R331 are Cytoplasmic-facing. The helical transmembrane segment at R332 to S352 threads the bilayer. At L353–S363 the chain is on the extracellular side. Residues F364–V389 form a helical membrane-spanning segment. Residues E378 and W386 each contribute to the D-glucose site. At A390–P399 the chain is on the cytoplasmic side. Residues A400–F420 form a helical membrane-spanning segment. Residues P421–A429 are Extracellular-facing. The helical transmembrane segment at Y430 to V450 threads the bilayer. Residues P451–A493 are Cytoplasmic-facing. Residues S471, S475, and S482 each carry the phosphoserine modification. T489 carries the post-translational modification Phosphothreonine.

The protein belongs to the major facilitator superfamily. Sugar transporter (TC 2.A.1.1) family. Glucose transporter subfamily. Interacts with SMIM43; the interaction may promote SLC2A3-mediated glucose transport to meet the energy needs of mesendoderm differentiation. Brain and osteoblastic cells (at protein level). Highly expressed in brain.

The protein localises to the cell membrane. The protein resides in the perikaryon. It localises to the cell projection. It catalyses the reaction D-glucose(out) = D-glucose(in). It carries out the reaction D-galactose(in) = D-galactose(out). Its activity is regulated as follows. Deoxyglucose transport is inhibited by D-glucose, D-galactose and maltose. Galactose transport is inhibited by D-glucose and maltose. Its function is as follows. Facilitative glucose transporter. Can also mediate the uptake of various other monosaccharides across the cell membrane. Mediates the uptake of glucose, 2-deoxyglucose, galactose, mannose, xylose and fucose, and probably also dehydroascorbate. Does not mediate fructose transport. Required for mesendoderm differentiation. The sequence is that of Solute carrier family 2, facilitated glucose transporter member 3 from Rattus norvegicus (Rat).